We begin with the raw amino-acid sequence, 325 residues long: Protein TMED8 (325 aa).

The tract at residues 1 to 78 is disordered; the sequence is MSDLQAAEGP…MVSPVSKDAT (78 aa). The 165-residue stretch at 159-323 folds into the GOLD domain; it reads PPCIWTFAKV…NKTLYFHIYY (165 aa). The residue at position 169 (Lys-169) is an N6-acetyllysine. A disordered region spans residues 232–267; that stretch reads TVQVSDSSDDEDEEEEEEEEIEEPVPAGDVERGSRS. Over residues 238–254 the composition is skewed to acidic residues; sequence SSDDEDEEEEEEEEIEE.

This chain is Protein TMED8 (TMED8), found in Homo sapiens (Human).